The sequence spans 315 residues: DNA-directed RNA polymerase subunit alpha (315 aa).

The segment at 1–228 (MLEIEKPKIE…EHFKLFMTLT (228 aa)) is alpha N-terminal domain (alpha-NTD). The tract at residues 245-315 (KEKVLEMAIE…LGLSLKQNED (71 aa)) is alpha C-terminal domain (alpha-CTD).

It belongs to the RNA polymerase alpha chain family. Homodimer. The RNAP catalytic core consists of 2 alpha, 1 beta, 1 beta' and 1 omega subunit. When a sigma factor is associated with the core the holoenzyme is formed, which can initiate transcription.

It catalyses the reaction RNA(n) + a ribonucleoside 5'-triphosphate = RNA(n+1) + diphosphate. DNA-dependent RNA polymerase catalyzes the transcription of DNA into RNA using the four ribonucleoside triphosphates as substrates. The polypeptide is DNA-directed RNA polymerase subunit alpha (Clostridium kluyveri (strain NBRC 12016)).